We begin with the raw amino-acid sequence, 360 residues long: Phospho-N-acetylmuramoyl-pentapeptide-transferase (360 aa).

10 helical membrane passes run 26-46 (AILGLLTALVFSLWFGPKLIE), 74-94 (MGGLLILAAIFISVLLWGDLG), 97-117 (YVWVMLFVLGSFGLIGFIDDY), 134-154 (YILQSLAALLIAFFLYATAAN), 168-188 (VMPQLGAVFIVLAYFTIVGSS), 199-219 (GLAIMPTVMVAAAFALIAYLS), 236-256 (SGELVIVCTAIVGAGLGFLWF), 263-283 (VFMGDVGSLSLGAALGTIAVL), 288-308 (ILLVIMGGVFVMETLSVILQV), and 338-358 (VIVRFWIISIFLVLLGLATLK).

The protein belongs to the glycosyltransferase 4 family. MraY subfamily. Mg(2+) is required as a cofactor.

It localises to the cell inner membrane. It carries out the reaction UDP-N-acetyl-alpha-D-muramoyl-L-alanyl-gamma-D-glutamyl-meso-2,6-diaminopimeloyl-D-alanyl-D-alanine + di-trans,octa-cis-undecaprenyl phosphate = di-trans,octa-cis-undecaprenyl diphospho-N-acetyl-alpha-D-muramoyl-L-alanyl-D-glutamyl-meso-2,6-diaminopimeloyl-D-alanyl-D-alanine + UMP. It participates in cell wall biogenesis; peptidoglycan biosynthesis. Functionally, catalyzes the initial step of the lipid cycle reactions in the biosynthesis of the cell wall peptidoglycan: transfers peptidoglycan precursor phospho-MurNAc-pentapeptide from UDP-MurNAc-pentapeptide onto the lipid carrier undecaprenyl phosphate, yielding undecaprenyl-pyrophosphoryl-MurNAc-pentapeptide, known as lipid I. The sequence is that of Phospho-N-acetylmuramoyl-pentapeptide-transferase from Shewanella baltica (strain OS195).